A 510-amino-acid chain; its full sequence is Maturase K (510 aa).

Belongs to the intron maturase 2 family. MatK subfamily.

The protein resides in the plastid. Its subcellular location is the chloroplast. Its function is as follows. Usually encoded in the trnK tRNA gene intron. Probably assists in splicing its own and other chloroplast group II introns. The sequence is that of Maturase K from Thuja plicata (Western red-cedar).